The chain runs to 345 residues: Probable glucan endo-1,3-beta-glucosidase BG4 (345 aa).

The N-terminal stretch at 1 to 22 (MLYSPKKLFLFFLSCIVLYVNS) is a signal peptide. 2 N-linked (GlcNAc...) asparagine glycosylation sites follow: asparagine 23 and asparagine 119. The active-site Proton donor is the glutamate 128. Residue glutamate 267 is the Nucleophile of the active site. 2 N-linked (GlcNAc...) asparagine glycosylation sites follow: asparagine 277 and asparagine 306.

This sequence belongs to the glycosyl hydrolase 17 family.

Its subcellular location is the secreted. It carries out the reaction Hydrolysis of (1-&gt;3)-beta-D-glucosidic linkages in (1-&gt;3)-beta-D-glucans.. Its function is as follows. May play a role in plant defense against pathogens. The sequence is that of Probable glucan endo-1,3-beta-glucosidase BG4 from Arabidopsis thaliana (Mouse-ear cress).